The primary structure comprises 450 residues: MSLYAPIAAIATAPGRGGIGVVRISGPDLAELAQRLFGRPLTPRHAHYLPFRAADGEVIDEGLAIYFRAPHSYTGEDVLELQGHGGPAVLRRILARCLQAGHDLGLRPAEPGEFTRRAFLNERLDLAQAEAVADLIDASSEAAARGAMTSLSGEFSQRVNDLSDRIIHLRMLVEATLDFPEEEIDFLEKYQARPTLQALTHDLDTLIAQARQGVILREGLHVVLAGKPNVGKSSLLNALAGDDIAIVTPIAGTTRDKVVQEIHIDGVPLHIVDTAGLRDTDDAVESIGIERTWKEIERADLILHLQDVTQPPDHLDAQIVRRLPARTPVLNVFNKVDLLDAAFQGQPDSLAISARGGIGLDALRQRLLQLAGWNPGAESPWLARERHLHALQQAAQHLEIATEHAREDDRVLDLFAEELRLAHEALTGITGKFTSDDLLGEIFSSFCIGK.

Residues Arg23, Glu80, and Arg123 each coordinate (6S)-5-formyl-5,6,7,8-tetrahydrofolate. The 154-residue stretch at 219-372 (GLHVVLAGKP…LRQRLLQLAG (154 aa)) folds into the TrmE-type G domain. A K(+)-binding site is contributed by Asn229. Residues 229-234 (NVGKSS), 248-254 (TPIAGTT), 273-276 (DTAG), and 353-355 (SAR) each bind GTP. A Mg(2+)-binding site is contributed by Ser233. Thr248, Ile250, and Thr253 together coordinate K(+). Mg(2+) is bound at residue Thr254. Residue Lys450 coordinates (6S)-5-formyl-5,6,7,8-tetrahydrofolate.

It belongs to the TRAFAC class TrmE-Era-EngA-EngB-Septin-like GTPase superfamily. TrmE GTPase family. As to quaternary structure, homodimer. Heterotetramer of two MnmE and two MnmG subunits. Requires K(+) as cofactor.

It is found in the cytoplasm. In terms of biological role, exhibits a very high intrinsic GTPase hydrolysis rate. Involved in the addition of a carboxymethylaminomethyl (cmnm) group at the wobble position (U34) of certain tRNAs, forming tRNA-cmnm(5)s(2)U34. The polypeptide is tRNA modification GTPase MnmE (Bordetella bronchiseptica (strain ATCC BAA-588 / NCTC 13252 / RB50) (Alcaligenes bronchisepticus)).